The primary structure comprises 371 residues: Ecto-ADP-ribosyltransferase 3 (371 aa).

An N-terminal signal peptide occupies residues 1 to 26 (MKMGHFEMVTTLLAAAVLMDIFQVKA). A disulfide bridge links cysteine 43 with cysteine 255. Residues 64 to 250 (ALLRMVWDNA…LVLQSINSTC (187 aa)) enclose the TR mART core domain. Residues tyrosine 101 and asparagine 182 each contribute to the NAD(+) site. The segment at 306-346 (VLQTEENPLLPDEKPDRSRGKANNPTPGLVPGPKSHPSASS) is disordered. The GPI-anchor amidated serine moiety is linked to residue serine 345. A propeptide spans 346–371 (SGNTLLPSVMASTILLVASAVNFIEL) (removed in mature form).

The protein belongs to the Arg-specific ADP-ribosyltransferase family.

The protein resides in the cell membrane. It catalyses the reaction L-arginyl-[protein] + NAD(+) = N(omega)-(ADP-D-ribosyl)-L-arginyl-[protein] + nicotinamide + H(+). The polypeptide is Ecto-ADP-ribosyltransferase 3 (Art3) (Mus musculus (Mouse)).